A 270-amino-acid polypeptide reads, in one-letter code: Probable septum site-determining protein MinC (270 aa).

The interval 105 to 129 (DRRAPSSKAADEAPVQQAEPAAPAA) is disordered. Residues 116 to 129 (EAPVQQAEPAAPAA) are compositionally biased toward low complexity.

It belongs to the MinC family. As to quaternary structure, interacts with MinD and FtsZ.

In terms of biological role, cell division inhibitor that blocks the formation of polar Z ring septums. Rapidly oscillates between the poles of the cell to destabilize FtsZ filaments that have formed before they mature into polar Z rings. Prevents FtsZ polymerization. The chain is Probable septum site-determining protein MinC from Burkholderia pseudomallei (strain 1106a).